Consider the following 1088-residue polypeptide: Extended synaptotagmin-1 (1088 aa).

Methionine 1 carries the N-acetylmethionine modification. Residues 1–30 (MERSPEEGAGPEPSGQSPATDSTRERDGGS) lie on the Cytoplasmic side of the membrane. Positions 1 to 38 (MERSPEEGAGPEPSGQSPATDSTRERDGGSGVPPAGPG) are disordered. A helical transmembrane segment spans residues 31 to 51 (GVPPAGPGAASEALAVLTSFG). At 52 to 54 (RRL) the chain is on the lumenal side. Residues 55–75 (LVLVPVYLAGAAGLSVGFVLF) form a helical membrane-spanning segment. Topologically, residues 76-1088 (GLALYLGWRR…LIDDRDKGGS (1013 aa)) are cytoplasmic. The 179-residue stretch at 127–305 (DVEKAEWLNK…LPNRLLVPLV (179 aa)) folds into the SMP-LTD domain. C2 domains lie at 304-425 (LVPD…DNWY), 446-572 (DAEK…QLSS), 618-740 (DAPP…DEWL), and 771-888 (QVNS…ALSG). Serine 316 is modified (phosphoserine; by CDK5). Ca(2+) contacts are provided by lysine 336, aspartate 337, aspartate 349, aspartate 396, aspartate 398, aspartate 400, aspartate 402, and aspartate 403. A disordered region spans residues 599–630 (TEPGAQDWDSESPETGSSVDAPPRPYHTTPNS). Lysine 806 carries the post-translational modification N6-acetyllysine. Serine 809 bears the Phosphoserine mark. The interval 911–930 (HSHSSSSLNEEPEVLGDPTH) is disordered. A phosphoserine mark is found at serine 933 and serine 947. One can recognise a C2 5 domain in the interval 955-1077 (PLGQVKLTVW…DLSQGAAQWY (123 aa)). At tyrosine 993 the chain carries Phosphotyrosine. A required for phosphatidylinositol 4,5-bisphosphate-dependent location at the cell membrane region spans residues 1002-1009 (KNRGTKRK).

The protein belongs to the extended synaptotagmin family. As to quaternary structure, interacts with ESYT2 and ESYT3. Interacts with ADGRD1; inhibiting the G-protein-coupled receptor activity of ADGRD1. Interaction with ADGRD1 is abolished when cytosolic calcium increases, relieving ADGRD1 G-protein-coupled receptor activity. Interacts (phosphorylated form) with SLC2A4. Post-translationally, phosphorylated on Ser residues in insulin-treated adipocytes (in vitro); this promotes interaction with SLC2A4. Ubiquitously expressed with a higher expression in spleen and white adipose tissue.

It localises to the endoplasmic reticulum membrane. The protein resides in the cell membrane. Functionally, binds calcium (via the C2 domains) and translocates to sites of contact between the endoplasmic reticulum and the cell membrane in response to increased cytosolic calcium levels. Helps tether the endoplasmic reticulum to the cell membrane and promotes the formation of appositions between the endoplasmic reticulum and the cell membrane. Acts as an inhibitor of ADGRD1 G-protein-coupled receptor activity in absence of cytosolic calcium. Binds glycerophospholipids in a barrel-like domain and may play a role in cellular lipid transport. This is Extended synaptotagmin-1 (Esyt1) from Rattus norvegicus (Rat).